Reading from the N-terminus, the 392-residue chain is Pannexin-3 (392 aa).

Residues methionine 1–lysine 39 lie on the Cytoplasmic side of the membrane. A helical transmembrane segment spans residues phenylalanine 40–serine 60. Residues glycine 61–serine 113 are Extracellular-facing. The N-linked (GlcNAc...) asparagine glycan is linked to asparagine 71. A helical transmembrane segment spans residues leucine 114–proline 134. The Cytoplasmic segment spans residues alanine 135–leucine 215. The helical transmembrane segment at leucine 216–phenylalanine 236 threads the bilayer. Residues glutamine 237 to serine 267 are Extracellular-facing. Residues isoleucine 268–isoleucine 288 traverse the membrane as a helical segment. Over tyrosine 289–proline 392 the chain is Cytoplasmic.

Belongs to the pannexin family. In terms of assembly, homoheptameric.

The protein localises to the cell membrane. It localises to the cell junction. The protein resides in the gap junction. It is found in the endoplasmic reticulum membrane. The enzyme catalyses Ca(2+)(in) = Ca(2+)(out). It carries out the reaction ATP(in) = ATP(out). Regulator of osteoblast differentiation by functionning as a Ca(2+) channel in the endoplasmic reticulum which regulates calmodulin (CaM) pathways. Allows ATP release into the extracellular space and activation or purinergic receptors. The sequence is that of Pannexin-3 from Homo sapiens (Human).